An 884-amino-acid polypeptide reads, in one-letter code: Ubiquitin carboxyl-terminal hydrolase 20 (884 aa).

A UBP-type zinc finger spans residues 6 to 109 (DFCPHLDSIG…SQTTSPRLSH (104 aa)). Residues Cys-8, His-10, Cys-30, Cys-33, Cys-43, Cys-48, Cys-53, His-60, His-64, His-70, Cys-83, and Cys-86 each coordinate Zn(2+). Positions 95–142 (RGPPASQTTSPRLSHRDFPTSAHPLKSVPIAVGDDGESESDEDDIKPR) are disordered. A compositionally biased stretch (acidic residues) spans 128–138 (DDGESESDEDD). In terms of domain architecture, USP spans 145 to 655 (TGMKNIGNSC…EAYVLFYRKS (511 aa)). Cys-154 (nucleophile) is an active-site residue. 2 disordered regions span residues 247–296 (LKEP…GGGG) and 368–388 (HPVESISKHSSTPPRSSPLRT). A compositionally biased stretch (basic and acidic residues) spans 264–274 (DDQREGERGGT). The segment covering 286-296 (GEMGDGEGGGG) has biased composition (gly residues). Residues 376–388 (HSSTPPRSSPLRT) show a composition bias toward low complexity. His-613 serves as the catalytic Proton acceptor. DUSP domains follow at residues 657 to 750 (EEAE…LYVC) and 759 to 862 (ALAK…RQTV).

This sequence belongs to the peptidase C19 family. USP20/USP33 subfamily.

The protein resides in the cytoplasm. The protein localises to the perinuclear region. It localises to the cytoskeleton. It is found in the microtubule organizing center. Its subcellular location is the centrosome. The enzyme catalyses Thiol-dependent hydrolysis of ester, thioester, amide, peptide and isopeptide bonds formed by the C-terminal Gly of ubiquitin (a 76-residue protein attached to proteins as an intracellular targeting signal).. Functionally, deubiquitinating enzyme involved in beta-2 adrenergic receptor (adrb2) recycling. Acts as a regulator of G-protein coupled receptor (GPCR) signaling by mediating the deubiquitination beta-2 adrenergic receptor (adrb2). Plays a central role in adrb2 recycling and resensitization after prolonged agonist stimulation by constitutively binding adrb2, mediating deubiquitination of adrb2 and inhibiting lysosomal trafficking of adrb2. Mediates deubiquitination of both 'Lys-48'- and 'Lys-63'-linked polyubiquitin chains. This Xenopus tropicalis (Western clawed frog) protein is Ubiquitin carboxyl-terminal hydrolase 20 (usp20).